Consider the following 219-residue polypeptide: Transmembrane protein 17B (219 aa).

An N-linked (GlcNAc...) asparagine glycan is attached at N26. 4 helical membrane passes run 51–71 (MMLYFNAFFFPFWIISEIITM), 84–104 (ILLTTSLVILTLVESLRLYIG), 116–136 (LAGFLILTLLIQLPLLLFLLT), and 147–167 (LAVHMIYLMFINAEIVISFLV). N-linked (GlcNAc...) asparagine glycans are attached at residues N195 and N203.

The protein belongs to the TMEM17 family. As to quaternary structure, part of the tectonic-like complex (also named B9 complex).

It localises to the cell projection. The protein resides in the cilium membrane. In terms of biological role, transmembrane component of the tectonic-like complex, a complex localized at the transition zone of primary cilia and acting as a barrier that prevents diffusion of transmembrane proteins between the cilia and plasma membranes. Required for ciliogenesis and sonic hedgehog/SHH signaling. The chain is Transmembrane protein 17B (Tmem17-b) from Xenopus tropicalis (Western clawed frog).